We begin with the raw amino-acid sequence, 105 residues long: Large ribosomal subunit protein bL21 (105 aa).

Belongs to the bacterial ribosomal protein bL21 family. In terms of assembly, part of the 50S ribosomal subunit. Contacts protein L20.

In terms of biological role, this protein binds to 23S rRNA in the presence of protein L20. The chain is Large ribosomal subunit protein bL21 from Phocaeicola vulgatus (strain ATCC 8482 / DSM 1447 / JCM 5826 / CCUG 4940 / NBRC 14291 / NCTC 11154) (Bacteroides vulgatus).